Consider the following 391-residue polypeptide: Pyruvate dehydrogenase E1 component subunit alpha, mitochondrial (391 aa).

A mitochondrion-targeting transit peptide spans 1-26; sequence MALSTSRAINHIMKPLSAAVCATRRL. Pyruvate-binding residues include H92, Y118, R119, G167, V169, D198, G199, A200, N227, and Y229. Thiamine diphosphate contacts are provided by Y118, R119, G167, V169, D198, G199, A200, and N227. D198 is a binding site for Mg(2+). Positions 227 and 229 each coordinate Mg(2+). H293 contacts thiamine diphosphate. Residues 294–313 form a disordered region; it reads SMSDPGSTYRTRDEISGVRQ. Residues 303-313 show a composition bias toward basic and acidic residues; it reads RTRDEISGVRQ.

Tetramer of 2 alpha and 2 beta subunits. The cofactor is thiamine diphosphate. It depends on Mg(2+) as a cofactor.

It is found in the mitochondrion matrix. The catalysed reaction is N(6)-[(R)-lipoyl]-L-lysyl-[protein] + pyruvate + H(+) = N(6)-[(R)-S(8)-acetyldihydrolipoyl]-L-lysyl-[protein] + CO2. Its activity is regulated as follows. E1 activity is regulated by phosphorylation (inactivation) and dephosphorylation (activation) of the alpha subunit. In terms of biological role, the pyruvate dehydrogenase complex catalyzes the overall conversion of pyruvate to acetyl-CoA and CO(2). It contains multiple copies of three enzymatic components: pyruvate dehydrogenase (E1), dihydrolipoamide acetyltransferase (E2) and lipoamide dehydrogenase (E3). This chain is Pyruvate dehydrogenase E1 component subunit alpha, mitochondrial, found in Solanum tuberosum (Potato).